Here is a 206-residue protein sequence, read N- to C-terminus: Oligoribonuclease (206 aa).

One can recognise an Exonuclease domain in the interval 20–183 (LVWLDMEMTG…ADIHESIDEL (164 aa)). Tyr141 is a catalytic residue.

Belongs to the oligoribonuclease family.

It is found in the cytoplasm. In terms of biological role, 3'-to-5' exoribonuclease specific for small oligoribonucleotides. In Burkholderia cenocepacia (strain HI2424), this protein is Oligoribonuclease.